The chain runs to 100 residues: uncharacterized protein (100 aa).

Residues 68–88 (VFLFFFTGSSPSFPAALLGLF) traverse the membrane as a helical segment.

It is found in the membrane. This is an uncharacterized protein from Saccharomyces cerevisiae (strain ATCC 204508 / S288c) (Baker's yeast).